The primary structure comprises 395 residues: Glutamate N-acetyltransferase (395 aa).

Thr-146, Lys-169, Thr-180, Glu-263, Asn-390, and Thr-395 together coordinate substrate. Thr-180 (nucleophile) is an active-site residue.

Belongs to the ArgJ family. Heterotetramer of two alpha and two beta chains.

The protein resides in the cytoplasm. The enzyme catalyses N(2)-acetyl-L-ornithine + L-glutamate = N-acetyl-L-glutamate + L-ornithine. The protein operates within amino-acid biosynthesis; L-arginine biosynthesis; L-ornithine and N-acetyl-L-glutamate from L-glutamate and N(2)-acetyl-L-ornithine (cyclic): step 1/1. In terms of biological role, catalyzes the transfer of the acetyl group from N(2)-acetylornithine to glutamate, forming N-acetylglutamate and L-ornithine. This Methanosarcina mazei (strain ATCC BAA-159 / DSM 3647 / Goe1 / Go1 / JCM 11833 / OCM 88) (Methanosarcina frisia) protein is Glutamate N-acetyltransferase.